The following is a 298-amino-acid chain: Protein REVEILLE 8 (298 aa).

The segment at M1–E44 is disordered. An HTH myb-type domain is found at T38–Q92. Residues W65–F88 constitute a DNA-binding region (H-T-H motif). The interval T96–M123 is disordered.

It localises to the nucleus. Its function is as follows. Transcriptional activator of evening element (EE)-containing clock-controlled genes. Forms a negative feedback loop with APRR5. Regulates the pattern of histone H3 acetylation of the TOC1 promoter. RVE4, RVE6 and RVE8 are components of the circadian system acting synergistically to regulate flowering time, redundantly to regulate leaf growth, and antagonistically to regulate hypocotyl elongation; their action seems independent of ZTL and HY5. This chain is Protein REVEILLE 8, found in Arabidopsis thaliana (Mouse-ear cress).